The following is a 113-amino-acid chain: Photosystem II reaction center Psb28 protein (113 aa).

This sequence belongs to the Psb28 family. In terms of assembly, part of the photosystem II complex.

The protein resides in the cellular thylakoid membrane. The protein is Photosystem II reaction center Psb28 protein of Trichodesmium erythraeum (strain IMS101).